We begin with the raw amino-acid sequence, 332 residues long: NADH-quinone oxidoreductase subunit H (332 aa).

A run of 9 helical transmembrane segments spans residues 4 to 24 (FAFF…IFAS), 44 to 64 (IGPD…MIKL), 78 to 98 (FIFA…LAAI), 120 to 140 (VALL…FLGG), 165 to 185 (VGAL…LVDI), 194 to 214 (FSWL…ALFI), 255 to 275 (IAGA…FWII), 279 to 299 (IMMI…RAAF), and 312 to 332 (YLIL…AVLL).

This sequence belongs to the complex I subunit 1 family. As to quaternary structure, NDH-1 is composed of 14 different subunits. Subunits NuoA, H, J, K, L, M, N constitute the membrane sector of the complex.

Its subcellular location is the cell inner membrane. It catalyses the reaction a quinone + NADH + 5 H(+)(in) = a quinol + NAD(+) + 4 H(+)(out). Functionally, NDH-1 shuttles electrons from NADH, via FMN and iron-sulfur (Fe-S) centers, to quinones in the respiratory chain. The immediate electron acceptor for the enzyme in this species is believed to be ubiquinone. Couples the redox reaction to proton translocation (for every two electrons transferred, four hydrogen ions are translocated across the cytoplasmic membrane), and thus conserves the redox energy in a proton gradient. This subunit may bind ubiquinone. This Campylobacter jejuni subsp. doylei (strain ATCC BAA-1458 / RM4099 / 269.97) protein is NADH-quinone oxidoreductase subunit H.